A 545-amino-acid chain; its full sequence is Chaperonin GroEL (545 aa).

ATP contacts are provided by residues 31-34, 88-92, glycine 415, 478-480, and aspartate 494; these read TLGP, DGTTT, and NAA.

It belongs to the chaperonin (HSP60) family. In terms of assembly, forms a cylinder of 14 subunits composed of two heptameric rings stacked back-to-back. Interacts with the co-chaperonin GroES.

The protein localises to the cytoplasm. The catalysed reaction is ATP + H2O + a folded polypeptide = ADP + phosphate + an unfolded polypeptide.. Functionally, together with its co-chaperonin GroES, plays an essential role in assisting protein folding. The GroEL-GroES system forms a nano-cage that allows encapsulation of the non-native substrate proteins and provides a physical environment optimized to promote and accelerate protein folding. This Streptococcus pyogenes serotype M4 (strain MGAS10750) protein is Chaperonin GroEL.